Reading from the N-terminus, the 975-residue chain is Protein cramped (975 aa).

Disordered regions lie at residues 1 to 37 (MEEL…GGGA), 71 to 111 (QKMK…GSGK), 318 to 346 (AIFP…PSVA), 403 to 450 (PVAA…LMKM), and 809 to 844 (PIDR…QEPG). Residues 7 to 20 (QPPPPPPLPPPPSS) are compositionally biased toward pro residues. Residues 86 to 98 (SEREPNKKEEKAA) show a composition bias toward basic and acidic residues. The span at 100-111 (KTPSQLKTGSGK) shows a compositional bias: polar residues. The 65-residue stretch at 109–173 (SGKTTWTNVE…HYYQTYHKIC (65 aa)) folds into the SANT domain. Residues 410 to 425 (LRTESGSEKRSPETKK) are compositionally biased toward basic and acidic residues. Residues 815–833 (GTSSGGISSSGSKPDSSMG) are compositionally biased toward low complexity.

The protein belongs to the cramped family.

The protein resides in the nucleus. Its function is as follows. Polycomb group (Pc-G) genes are needed to maintain expression patterns of the homeotic selector genes of the Antennapedia (Antp-C) and Bithorax (Bx-C) complexes, and hence for the maintenance of segmental determination. Can act as a modifier of position effect variegation (PEV). The chain is Protein cramped (crm) from Drosophila sechellia (Fruit fly).